A 499-amino-acid polypeptide reads, in one-letter code: Diacylglycerol kinase 1 (499 aa).

Residues 41–194 (APCCPVVVFI…IDSWHIIMRM (154 aa)) form the DAGKc domain. The disordered stretch occupies residues 442 to 479 (PCKSKSVNDPSSPMCCSNHDDDERNSLEDEDEWEEGRK). The span at 446 to 456 (KSVNDPSSPMC) shows a compositional bias: polar residues. The segment covering 459–468 (NHDDDERNSL) has biased composition (basic and acidic residues).

This sequence belongs to the eukaryotic diacylglycerol kinase family. As to quaternary structure, monomer. Highly expressed in roots.

It carries out the reaction a 1,2-diacyl-sn-glycerol + ATP = a 1,2-diacyl-sn-glycero-3-phosphate + ADP + H(+). Phosphorylates the second messenger diacylglycerol (DAG) to generate phosphatidic acid (PA), another important signaling molecule. PA is required for plant development and responses to abiotic stress. May play a role in disease resistance responses to pathogen attack. Modulates root architecture by regulating the ratio of DAG and PA, which have opposite effect on the promotion or suppression of lateral roots vs seminal roots. Suppresses lateral root number, but promotes seminal root and crown root thickness. In Oryza sativa subsp. japonica (Rice), this protein is Diacylglycerol kinase 1.